A 424-amino-acid polypeptide reads, in one-letter code: PtdIns3K complex I subunit atg38 (424 aa).

The stretch at 50–78 forms a coiled coil; it reads LIKRCANNQIEELMVRIRELRESLPNKQT. The required for interaction with atg8 stretch occupies residues 73–212; it reads LPNKQTPISM…DPAYQNTNEQ (140 aa). Residues 178–181 carry the AIM motif; the sequence is FLIV. Residues 268 to 284 show a composition bias toward basic and acidic residues; sequence LSEEEMGRSHKREESFK. Residues 268–299 form a disordered region; the sequence is LSEEEMGRSHKREESFKRAFGHASSSESSIGE. A coiled-coil region spans residues 390-420; the sequence is TVDSQLKIKQLETQIATLQKQLEQFQTSTLD.

This sequence belongs to the ATG38 family. As to quaternary structure, component of the autophagy-specific vps34 PI3-kinase complex I composed of vps15, atg6, pik3/vps34, atg14 and atg38. Interacts (via AIM motif) with atg8; the interaction is direct and leads to recruitment of the autophagy-specific vps34 PI3-kinase complex I to the phagophore assembly site.

The protein localises to the preautophagosomal structure membrane. Its subcellular location is the cytoplasm. The protein resides in the cytosol. Functions as a part of the autophagy-specific VPS34 PI3-kinase complex I that plays a role in autophagosome assembly. This complex is essential to recruit the atg8-phosphatidylinositol conjugate and the atg12-atg5 conjugate to the pre-autophagosomal structure. By binding to atg8 at the phagophore assembly site, atg38 helps establish a positive feedback loop for recruitment of phagophore assembly proteins, including atg8. This chain is PtdIns3K complex I subunit atg38, found in Schizosaccharomyces pombe (strain 972 / ATCC 24843) (Fission yeast).